We begin with the raw amino-acid sequence, 208 residues long: Octanoyltransferase (208 aa).

The BPL/LPL catalytic domain occupies 31–208 (GSEREMVWLL…LKKEFYKVFA (178 aa)). Residues 70–77 (RGGKYSYH), 142–144 (AFG), and 155–157 (GVA) each bind substrate. Residue cysteine 173 is the Acyl-thioester intermediate of the active site.

Belongs to the LipB family.

The protein resides in the cytoplasm. It catalyses the reaction octanoyl-[ACP] + L-lysyl-[protein] = N(6)-octanoyl-L-lysyl-[protein] + holo-[ACP] + H(+). It functions in the pathway protein modification; protein lipoylation via endogenous pathway; protein N(6)-(lipoyl)lysine from octanoyl-[acyl-carrier-protein]: step 1/2. Catalyzes the transfer of endogenously produced octanoic acid from octanoyl-acyl-carrier-protein onto the lipoyl domains of lipoate-dependent enzymes. Lipoyl-ACP can also act as a substrate although octanoyl-ACP is likely to be the physiological substrate. The polypeptide is Octanoyltransferase (Anaplasma phagocytophilum (strain HZ)).